Here is a 671-residue protein sequence, read N- to C-terminus: MKKKANEEKAQKRAKTEAKAEATQENKTKENNKAKESKIKESKIKEAKAKEPIPVKKLSFNEALEELFANSLSDCVSYESIIQISAKVPTLAQIKKIKELCQKYQKKLVSSSEYAKKLNAIDKIKKTEEKQKVLDEELEDGYDFLKEKDFLEWSRSDSPVRMYLREMGDIKLLSKDEEIELSKQIRLGEDIILDAICSVPYLIDFIYAYKDALINRERRVKELFRSFDDDDENSVSDSKKDEDNEEDEENEERKKVVSEKDKKRVEKVQESFKALDKAKKEWLKALEAPIDEREDELVRSLTLAYKRQTLKDRLYDLEPTSKLINELVKTMETTLKSGDGFEKELKRLEYKLPLFNDTLIANHKKILANITNMTKEDIIAQVPEATMVSVYMDLKKLFLTKEASEEGFDLAPNKLKEILEQIKRGKLISDRAKNKMAKSNLRLVVSIAKRFTSRGLPFLDLIQEGNIGLMKAVDKFEHEKGFKFSTYATWWIKQAISRAIADQARTIRIPIHMIDTINRINKVMRKHIQENGKEPDLEVVAEEVGLSLDKVKNVIKVTKEPISLETPVGNDDDGKFGDFVEDKNIVSSIDHIMREDLKAQIESVLDQLNEREKAVIRMRFGLLDDESDRTLEEIGKELNVTRERVRQIESSAIKKLRSPQYGRILRNYLRI.

Disordered stretches follow at residues 1–45 and 229–260; these read MKKK…SKIK and DDDE…VSEK. A compositionally biased stretch (basic and acidic residues) spans 251-260; the sequence is EERKKVVSEK. The sigma-70 factor domain-2 stretch occupies residues 436–506; sequence MAKSNLRLVV…SRAIADQART (71 aa). Residues 460-463 carry the Interaction with polymerase core subunit RpoC motif; it reads DLIQ. The interval 515–591 is sigma-70 factor domain-3; the sequence is DTINRINKVM…DKNIVSSIDH (77 aa). The sigma-70 factor domain-4 stretch occupies residues 604-658; that stretch reads VLDQLNEREKAVIRMRFGLLDDESDRTLEEIGKELNVTRERVRQIESSAIKKLRS. Residues 631-650 constitute a DNA-binding region (H-T-H motif); it reads LEEIGKELNVTRERVRQIES.

Belongs to the sigma-70 factor family. RpoD/SigA subfamily. As to quaternary structure, interacts transiently with the RNA polymerase catalytic core.

It is found in the cytoplasm. Sigma factors are initiation factors that promote the attachment of RNA polymerase to specific initiation sites and are then released. This sigma factor is the primary sigma factor during exponential growth. This is RNA polymerase sigma factor RpoD from Helicobacter pylori (strain ATCC 700392 / 26695) (Campylobacter pylori).